Reading from the N-terminus, the 283-residue chain is MDDSLRVSILSEALPYIQSFSGRKIVVKYGGSIMEDEKLKKAFFRDIALLSSVGVCPVVIHGGGPEINRWLSKLEISPKFEKGLRVTDDKTMEIVEMVLMGRVNKQIVRGINKTGSLAVGISGLDGNLIQSRELGDGSHGLVGEVTQINPELLEPLIAKGYIPVISSIGSTTDGISHNINADFVAGELAAAINAEKLILLTDTPGILKERNNPNSLAKQINLKEARKFIEKNIVSNGMLPKTECCIRALAQGVRAAHIIDGRIEHSLLLEIFTNSGIGTMINA.

Substrate is bound by residues 63–64 (GG), R85, and N178.

Belongs to the acetylglutamate kinase family. ArgB subfamily.

It is found in the cytoplasm. It catalyses the reaction N-acetyl-L-glutamate + ATP = N-acetyl-L-glutamyl 5-phosphate + ADP. It functions in the pathway amino-acid biosynthesis; L-arginine biosynthesis; N(2)-acetyl-L-ornithine from L-glutamate: step 2/4. In terms of biological role, catalyzes the ATP-dependent phosphorylation of N-acetyl-L-glutamate. This is Acetylglutamate kinase from Prochlorococcus marinus (strain MIT 9515).